We begin with the raw amino-acid sequence, 379 residues long: Protein RecA (379 aa).

79–86 (GPESSGKT) is a binding site for ATP.

Belongs to the RecA family.

Its subcellular location is the cytoplasm. In terms of biological role, can catalyze the hydrolysis of ATP in the presence of single-stranded DNA, the ATP-dependent uptake of single-stranded DNA by duplex DNA, and the ATP-dependent hybridization of homologous single-stranded DNAs. It interacts with LexA causing its activation and leading to its autocatalytic cleavage. In Streptococcus agalactiae serotype III (strain NEM316), this protein is Protein RecA.